A 489-amino-acid chain; its full sequence is Tripartite motif-containing protein 10 (489 aa).

Residues 16-61 (CPVCQGTLREPVTIDCGHNFCRVCLTRYLEITSPDPEEPPTCPLCK) form an RING-type zinc finger. Residues 94-135 (DEEDVCPEHGEKVYFFCEDDEMQLCVVCREAWEHRAHTVRFL) form a B box-type zinc finger. Zn(2+) is bound by residues cysteine 99, histidine 102, cysteine 121, and histidine 127. Residues 142–245 (YREQIQKCLE…IEELEEKKER (104 aa)) are a coiled coil. The B30.2/SPRY domain occupies 292–486 (REMKMFLEKL…FSLSSQEGAA (195 aa)).

This sequence belongs to the TRIM/RBCC family. As to quaternary structure, interacts with IFNAR1; this interaction prevents association of IFNAR1 with TYK2.

The protein resides in the cytoplasm. Functionally, E3 ligase that plays an essential role in the differentiation and survival of terminal erythroid cells. May directly bind to PTEN and promote its ubiquitination, resulting in its proteasomal degradation and activation of hypertrophic signaling. In addition, plays a role in immune response regulation by repressing the phosphorylation of STAT1 and STAT2 in the interferon/JAK/STAT signaling pathway independent of its E3 ligase activity. Mechanistically, interacts with the intracellular domain of IFNAR1 and thereby inhibits the association between TYK2 and IFNAR1. This chain is Tripartite motif-containing protein 10 (TRIM10), found in Bos taurus (Bovine).